The primary structure comprises 1310 residues: Contactin-associated protein-like 4 (1310 aa).

An N-terminal signal peptide occupies residues 1–27 (MNMGSVAGAVLKMLLLLSTQNWNRVEA). Residues 28–1243 (GNSYDCDEPL…LTHAIKSDSA (1216 aa)) lie on the Extracellular side of the membrane. The region spanning 33-179 (CDEPLVSALP…IGMRIEVFGC (147 aa)) is the F5/8 type C domain. C33 and C179 are disulfide-bonded. One can recognise a Laminin G-like 1 domain in the interval 214 to 346 (FKTMESDGIL…NLFYNGVDVI (133 aa)). N262, N287, and N361 each carry an N-linked (GlcNAc...) asparagine glycan. Cystine bridges form between C334/C366, C517/C549, C555/C566, and C560/C575. The region spanning 400–529 (FRTWNKAGLL…LISINNKMVD (130 aa)) is the Laminin G-like 2 domain. N-linked (GlcNAc...) asparagine glycosylation occurs at N540. The 38-residue stretch at 551 to 588 (ISDRCLPNSCEHGGECSQSWSTFHCNCTNTGYTGATCH) folds into the EGF-like 1 domain. An N-linked (GlcNAc...) asparagine glycan is attached at N576. Cysteines 577 and 587 form a disulfide. Residues 589–794 (SSVYEQSCEA…LLCRGDRPFW (206 aa)) form the Fibrinogen C-terminal domain. N-linked (GlcNAc...) asparagine glycans are attached at residues N604, N627, N639, N708, and N750. In terms of domain architecture, Laminin G-like 3 spans 795–960 (NAASFNTEAS…TVTPGVQPGC (166 aa)). 4 disulfide bridges follow: C933–C960, C964–C977, C971–C986, and C988–C998. The 40-residue stretch at 960–999 (CRGHCGSYGKLCRHGGKCREKPSGFFCDCSSSAYAGPFCS) folds into the EGF-like 2 domain. N1019, N1025, and N1075 each carry an N-linked (GlcNAc...) asparagine glycan. The Laminin G-like 4 domain maps to 1048 to 1204 (FRTTRAPSLL…VTGHVTESSC (157 aa)). Cysteines 1169 and 1204 form a disulfide. Residues 1244–1264 (VIGGLIAVVIFILLCVSAIAV) form a helical membrane-spanning segment. Over 1265-1310 (RIYQQKRLYKRNEAKRSENVDSAEAVLKSELHIQNAVGENQKEYFF) the chain is Cytoplasmic.

This sequence belongs to the neurexin family. As to quaternary structure, interacts with TIAM1. Specifically present in developing cortical interneurons: highly expressed in cortical parvalbumin (PV) cells and midbrain dopaminergic neurons and is localized presynaptically (at protein level). Also present in the substantia nigra pars compacta (SnC) and ventral tegmental area (VTA) midbrain dopaminergic projection populations.

Its subcellular location is the presynaptic cell membrane. Its function is as follows. Presynaptic protein involved in both dopaminergic synaptic transmission and GABAergic system, thereby participating in the structural maturation of inhibitory interneuron synapses. Involved in the dopaminergic synaptic transmission by attenuating dopamine release through a presynaptic mechanism. Also participates in the GABAergic system. The protein is Contactin-associated protein-like 4 (Cntnap4) of Mus musculus (Mouse).